Here is a 234-residue protein sequence, read N- to C-terminus: Ubiquitin thioesterase OTUB2 (234 aa).

Residues 40–231 enclose the OTU domain; the sequence is TAIRKTKGDG…TSHYNILYAA (192 aa). Residue aspartate 48 is part of the active site. Residue cysteine 51 is the Nucleophile of the active site. The active site involves histidine 224.

This sequence belongs to the peptidase C65 family. In terms of tissue distribution, widely expressed. Expressed at higher level in brain.

The catalysed reaction is Thiol-dependent hydrolysis of ester, thioester, amide, peptide and isopeptide bonds formed by the C-terminal Gly of ubiquitin (a 76-residue protein attached to proteins as an intracellular targeting signal).. Its function is as follows. Hydrolase that can remove conjugated ubiquitin from proteins in vitro and may therefore play an important regulatory role at the level of protein turnover by preventing degradation. Mediates deubiquitination of 'Lys-11'-,'Lys-48'- and 'Lys-63'-linked polyubiquitin chains, with a preference for 'Lys-63'-linked polyubiquitin chains. The chain is Ubiquitin thioesterase OTUB2 (OTUB2) from Homo sapiens (Human).